We begin with the raw amino-acid sequence, 130 residues long: Protachykinin-1 (130 aa).

Positions 1-19 (MKILVAVAVFFLVSTQLFA) are cleaved as a signal peptide. Positions 20-56 (EEIDANDDLNYWSDWSDSDQIKEAMPEPFEHLLQRIA) are excised as a propeptide. 2 positions are modified to methionine amide: Met68 and Met107.

The protein belongs to the tachykinin family. Post-translationally, the substance P form is cleaved at Pro-59 by the prolyl endopeptidase FAP (seprase) activity (in vitro). Substance P is also cleaved and degraded by Angiotensin-converting enzyme (ACE) and neprilysin (MME).

The protein resides in the secreted. Its function is as follows. Tachykinins are active peptides which excite neurons, evoke behavioral responses, are potent vasodilators and secretagogues, and contract (directly or indirectly) many smooth muscles. This Mus musculus (Mouse) protein is Protachykinin-1 (Tac1).